The chain runs to 573 residues: DEAD-box ATP-dependent RNA helicase 47B (573 aa).

The Q motif motif lies at 131–159 (KSFEELGLPPLLIDRLNKEGLSTPTEVQS). The Helicase ATP-binding domain maps to 162-362 (IPIISQKHDA…RSWGHDPVLV (201 aa)). 175-182 (SYTGSGKT) is an ATP binding site. The short motif at 293–296 (DEVD) is the DEAD box element. One can recognise a Helicase C-terminal domain in the interval 421 to 565 (TLRRCIHALE…PCEFTEGKLL (145 aa)).

This sequence belongs to the DEAD box helicase family.

The catalysed reaction is ATP + H2O = ADP + phosphate + H(+). The polypeptide is DEAD-box ATP-dependent RNA helicase 47B (Oryza sativa subsp. japonica (Rice)).